Consider the following 338-residue polypeptide: Ketol-acid reductoisomerase (NADP(+)) (338 aa).

The KARI N-terminal Rossmann domain occupies 1–181; that stretch reads MQVYYDKDCD…GGGRSGIIET (181 aa). Residues 24-27, arginine 47, serine 50, serine 52, and 82-85 contribute to the NADP(+) site; these read YGSQ and DEFQ. Histidine 107 is an active-site residue. Residue glycine 133 participates in NADP(+) binding. The KARI C-terminal knotted domain maps to 182–327; the sequence is TFKDETETDL…GKLRAMMPWI (146 aa). Mg(2+)-binding residues include aspartate 190, glutamate 194, glutamate 226, and glutamate 230. Serine 251 lines the substrate pocket.

It belongs to the ketol-acid reductoisomerase family. Requires Mg(2+) as cofactor.

It carries out the reaction (2R)-2,3-dihydroxy-3-methylbutanoate + NADP(+) = (2S)-2-acetolactate + NADPH + H(+). The catalysed reaction is (2R,3R)-2,3-dihydroxy-3-methylpentanoate + NADP(+) = (S)-2-ethyl-2-hydroxy-3-oxobutanoate + NADPH + H(+). It functions in the pathway amino-acid biosynthesis; L-isoleucine biosynthesis; L-isoleucine from 2-oxobutanoate: step 2/4. Its pathway is amino-acid biosynthesis; L-valine biosynthesis; L-valine from pyruvate: step 2/4. Its function is as follows. Involved in the biosynthesis of branched-chain amino acids (BCAA). Catalyzes an alkyl-migration followed by a ketol-acid reduction of (S)-2-acetolactate (S2AL) to yield (R)-2,3-dihydroxy-isovalerate. In the isomerase reaction, S2AL is rearranged via a Mg-dependent methyl migration to produce 3-hydroxy-3-methyl-2-ketobutyrate (HMKB). In the reductase reaction, this 2-ketoacid undergoes a metal-dependent reduction by NADPH to yield (R)-2,3-dihydroxy-isovalerate. The sequence is that of Ketol-acid reductoisomerase (NADP(+)) from Saccharophagus degradans (strain 2-40 / ATCC 43961 / DSM 17024).